Consider the following 101-residue polypeptide: NAD(P)H-quinone oxidoreductase subunit 4L, chloroplastic (101 aa).

3 consecutive transmembrane segments (helical) span residues 2–22 (MLEH…YGLI), 32–52 (MCLE…SDFF), and 61–81 (IFSI…SAIV).

It belongs to the complex I subunit 4L family. As to quaternary structure, NDH is composed of at least 16 different subunits, 5 of which are encoded in the nucleus.

The protein resides in the plastid. The protein localises to the chloroplast thylakoid membrane. The catalysed reaction is a plastoquinone + NADH + (n+1) H(+)(in) = a plastoquinol + NAD(+) + n H(+)(out). It carries out the reaction a plastoquinone + NADPH + (n+1) H(+)(in) = a plastoquinol + NADP(+) + n H(+)(out). In terms of biological role, NDH shuttles electrons from NAD(P)H:plastoquinone, via FMN and iron-sulfur (Fe-S) centers, to quinones in the photosynthetic chain and possibly in a chloroplast respiratory chain. The immediate electron acceptor for the enzyme in this species is believed to be plastoquinone. Couples the redox reaction to proton translocation, and thus conserves the redox energy in a proton gradient. The polypeptide is NAD(P)H-quinone oxidoreductase subunit 4L, chloroplastic (Gossypium barbadense (Sea Island cotton)).